The following is a 223-amino-acid chain: UPF0758 protein HD_0732 (223 aa).

Positions 98 to 220 constitute an MPN domain; the sequence is TINTPHLAIM…YFSFEEERFH (123 aa). The Zn(2+) site is built by His169, His171, and Asp182. The short motif at 169–182 is the JAMM motif element; that stretch reads HNHPSGNCTASQAD.

It belongs to the UPF0758 family.

The protein is UPF0758 protein HD_0732 of Haemophilus ducreyi (strain 35000HP / ATCC 700724).